Consider the following 271-residue polypeptide: Type III pantothenate kinase (271 aa).

6–13 is an ATP binding site; the sequence is DVRNTHTV. 109–112 is a binding site for substrate; it reads GADR. Asp-111 functions as the Proton acceptor in the catalytic mechanism. A K(+)-binding site is contributed by Asp-131. Residue Ser-134 coordinates ATP. Residue Thr-186 coordinates substrate.

The protein belongs to the type III pantothenate kinase family. Homodimer. Requires NH4(+) as cofactor. It depends on K(+) as a cofactor.

It localises to the cytoplasm. The catalysed reaction is (R)-pantothenate + ATP = (R)-4'-phosphopantothenate + ADP + H(+). Its pathway is cofactor biosynthesis; coenzyme A biosynthesis; CoA from (R)-pantothenate: step 1/5. Catalyzes the phosphorylation of pantothenate (Pan), the first step in CoA biosynthesis. This chain is Type III pantothenate kinase, found in Mycolicibacterium smegmatis (strain ATCC 700084 / mc(2)155) (Mycobacterium smegmatis).